The following is a 41-amino-acid chain: Large ribosomal subunit protein bL36 (41 aa).

The protein belongs to the bacterial ribosomal protein bL36 family.

The chain is Large ribosomal subunit protein bL36 from Dinoroseobacter shibae (strain DSM 16493 / NCIMB 14021 / DFL 12).